The following is a 316-amino-acid chain: Beta-agarase (316 aa).

An N-terminal signal peptide occupies residues 1 to 18 (MKRKLFTICLASLQFACA). One can recognise a GH16 domain in the interval 27–315 (YEWDIYPVPA…WIRVYTLVPE (289 aa)). Substrate contacts are provided by residues Trp78, 87 to 97 (QRDHVSVSDGF), and 101 to 103 (RAS). Glu167 serves as the catalytic Nucleophile. Glu172 functions as the Proton donor in the catalytic mechanism. Substrate is bound at residue Arg197.

Belongs to the glycosyl hydrolase 16 family.

The enzyme catalyses Hydrolysis of (1-&gt;4)-beta-D-galactosidic linkages in agarose, giving the tetramer as the predominant product.. Its function is as follows. Cleaves the beta-1,4-linkages between beta-D-galactose and alpha-L-3,6-anhydro-galactose residues in agarose. Cleaves agarose in a random manner with retention of the anomeric-bond configuration, producing beta-anomers that give rise progressively to alpha-anomers when mutarotation takes place. The protein is Beta-agarase of Phocaeicola plebeius (strain DSM 17135 / JCM 12973 / CCUG 54634 / M2) (Bacteroides plebeius).